An 889-amino-acid chain; its full sequence is DNA gyrase subunit A (889 aa).

The region spanning 35–501 (LPDVRDGLKP…GFEDLEDEDL (467 aa)) is the Topo IIA-type catalytic domain. Tyrosine 123 (O-(5'-phospho-DNA)-tyrosine intermediate) is an active-site residue. Positions 528–534 (QNRGGRG) match the GyrA-box motif. Residues 811 to 889 (KEDAEDETNE…IQQSSDEDEE (79 aa)) are disordered. A compositionally biased stretch (acidic residues) spans 813–823 (DAEDETNEDEQ). The span at 863–875 (DGRIEVRQDFMDR) shows a compositional bias: basic and acidic residues. Residues 876-889 (VEEDIQQSSDEDEE) are compositionally biased toward acidic residues.

It belongs to the type II topoisomerase GyrA/ParC subunit family. In terms of assembly, heterotetramer, composed of two GyrA and two GyrB chains. In the heterotetramer, GyrA contains the active site tyrosine that forms a transient covalent intermediate with DNA, while GyrB binds cofactors and catalyzes ATP hydrolysis.

The protein resides in the cytoplasm. It carries out the reaction ATP-dependent breakage, passage and rejoining of double-stranded DNA.. Functionally, a type II topoisomerase that negatively supercoils closed circular double-stranded (ds) DNA in an ATP-dependent manner to modulate DNA topology and maintain chromosomes in an underwound state. Negative supercoiling favors strand separation, and DNA replication, transcription, recombination and repair, all of which involve strand separation. Also able to catalyze the interconversion of other topological isomers of dsDNA rings, including catenanes and knotted rings. Type II topoisomerases break and join 2 DNA strands simultaneously in an ATP-dependent manner. This chain is DNA gyrase subunit A, found in Staphylococcus aureus (strain Mu50 / ATCC 700699).